The sequence spans 431 residues: Histidinol dehydrogenase (431 aa).

Residues Y124, Q187, and N210 each coordinate NAD(+). Substrate is bound by residues S236, Q258, and H261. Zn(2+)-binding residues include Q258 and H261. Active-site proton acceptor residues include E325 and H326. Substrate is bound by residues H326, D359, E413, and H418. D359 contributes to the Zn(2+) binding site. H418 is a binding site for Zn(2+).

The protein belongs to the histidinol dehydrogenase family. Zn(2+) is required as a cofactor.

It catalyses the reaction L-histidinol + 2 NAD(+) + H2O = L-histidine + 2 NADH + 3 H(+). It functions in the pathway amino-acid biosynthesis; L-histidine biosynthesis; L-histidine from 5-phospho-alpha-D-ribose 1-diphosphate: step 9/9. In terms of biological role, catalyzes the sequential NAD-dependent oxidations of L-histidinol to L-histidinaldehyde and then to L-histidine. The polypeptide is Histidinol dehydrogenase (Legionella pneumophila subsp. pneumophila (strain Philadelphia 1 / ATCC 33152 / DSM 7513)).